The primary structure comprises 131 residues: Profilin-4 (131 aa).

Belongs to the profilin family. As to quaternary structure, occurs in many kinds of cells as a complex with monomeric actin in a 1:1 ratio.

The protein resides in the cytoplasm. It localises to the cytoskeleton. In terms of biological role, binds to actin and affects the structure of the cytoskeleton. At high concentrations, profilin prevents the polymerization of actin, whereas it enhances it at low concentrations. By binding to PIP2, it inhibits the formation of IP3 and DG. The sequence is that of Profilin-4 from Hevea brasiliensis (Para rubber tree).